Consider the following 107-residue polypeptide: Phosphoribosyl-ATP pyrophosphatase (107 aa).

Belongs to the PRA-PH family.

The protein resides in the cytoplasm. It catalyses the reaction 1-(5-phospho-beta-D-ribosyl)-ATP + H2O = 1-(5-phospho-beta-D-ribosyl)-5'-AMP + diphosphate + H(+). Its pathway is amino-acid biosynthesis; L-histidine biosynthesis; L-histidine from 5-phospho-alpha-D-ribose 1-diphosphate: step 2/9. The sequence is that of Phosphoribosyl-ATP pyrophosphatase from Novosphingobium aromaticivorans (strain ATCC 700278 / DSM 12444 / CCUG 56034 / CIP 105152 / NBRC 16084 / F199).